Consider the following 1113-residue polypeptide: Lon protease homolog, mitochondrial (1113 aa).

A mitochondrion-targeting transit peptide spans 1–61; the sequence is MLRGQTLPWR…RAFSSSSIRR (61 aa). Residues 42-196 form a disordered region; it reads SRLHRSLPTS…SGEKALQKPS (155 aa). Basic and acidic residues-rich tracts occupy residues 64–99, 124–143, and 178–192; these read KPPP…RKAA, KAGA…KDGN, and DGGK…EKAL. Positions 204–456 constitute a Lon N-terminal domain; that stretch reads VMAIPIAKRP…KALVVLKKEL (253 aa). 609–616 lines the ATP pocket; it reads GPPGVGKT. The span at 828-858 shows a compositional bias: basic and acidic residues; that stretch reads LTDEGKAVQEESQKETESPDSKSPVDPEKST. The segment at 828–864 is disordered; sequence LTDEGKAVQEESQKETESPDSKSPVDPEKSTTETPRV. The Lon proteolytic domain maps to 898-1084; the sequence is TFPPGVTMGL…SEVFDLLFTD (187 aa). Catalysis depends on residues S990 and K1033.

This sequence belongs to the peptidase S16 family. Homohexamer or homoheptamer. Organized in a ring with a central cavity.

The protein localises to the mitochondrion matrix. The catalysed reaction is Hydrolysis of proteins in presence of ATP.. Its function is as follows. ATP-dependent serine protease that mediates the selective degradation of misfolded, unassembled or oxidatively damaged polypeptides as well as certain short-lived regulatory proteins in the mitochondrial matrix. May also have a chaperone function in the assembly of inner membrane protein complexes. Participates in the regulation of mitochondrial gene expression and in the maintenance of the integrity of the mitochondrial genome. Binds to mitochondrial DNA in a site-specific manner. This is Lon protease homolog, mitochondrial (pim1) from Aspergillus niger (strain ATCC MYA-4892 / CBS 513.88 / FGSC A1513).